We begin with the raw amino-acid sequence, 87 residues long: Small ribosomal subunit protein uS17 (87 aa).

Belongs to the universal ribosomal protein uS17 family. Part of the 30S ribosomal subunit.

One of the primary rRNA binding proteins, it binds specifically to the 5'-end of 16S ribosomal RNA. The sequence is that of Small ribosomal subunit protein uS17 from Chromobacterium violaceum (strain ATCC 12472 / DSM 30191 / JCM 1249 / CCUG 213 / NBRC 12614 / NCIMB 9131 / NCTC 9757 / MK).